The primary structure comprises 466 residues: Probable sensor protein PcoS (466 aa).

Residues 1–10 (MRFKISLTTR) lie on the Cytoplasmic side of the membrane. A helical transmembrane segment spans residues 11 to 31 (LSLIFSAVMLTVWWLSSFILI). The Periplasmic segment spans residues 32 to 171 (STLNDYFDNQ…HTLLMDKLST (140 aa)). Residues 172–192 (WLFWFNIGLVFISVFLGWLTT) form a helical membrane-spanning segment. Positions 193-246 (RIGLKPLREMTSLASSMTVHSLDQRLNPDLAPPEISETMQEFNNMFDRLEGAFR) constitute an HAMP domain. Residues 193–466 (RIGLKPLREM…IVFKVRLLMD (274 aa)) lie on the Cytoplasmic side of the membrane. Residues 254–466 (DIAHELRTPV…IVFKVRLLMD (213 aa)) form the Histidine kinase domain. At H257 the chain carries Phosphohistidine; by autocatalysis.

Its subcellular location is the cell inner membrane. It carries out the reaction ATP + protein L-histidine = ADP + protein N-phospho-L-histidine.. Functionally, probable member of a two-component regulatory system PcoS/PcoR. May activate PcoR by phosphorylation. This chain is Probable sensor protein PcoS (pcoS), found in Escherichia coli.